The chain runs to 735 residues: Catalase-peroxidase (735 aa).

A disordered region spans residues 1-25 (MSDSKCPVTGKSSRQVAGGGTSNRD). Positions 95 to 223 (WHSAGTYRMG…LAAVQMGLIY (129 aa)) form a cross-link, tryptophyl-tyrosyl-methioninium (Trp-Tyr) (with M-249). Residue H96 is the Proton acceptor of the active site. The segment at residues 223–249 (YINPEGPDGNPDPVASGRDVRETFARM) is a cross-link (tryptophyl-tyrosyl-methioninium (Tyr-Met) (with W-95)). Residue H264 participates in heme b binding.

It belongs to the peroxidase family. Peroxidase/catalase subfamily. Homodimer or homotetramer. Heme b is required as a cofactor. Formation of the three residue Trp-Tyr-Met cross-link is important for the catalase, but not the peroxidase activity of the enzyme.

It carries out the reaction H2O2 + AH2 = A + 2 H2O. The enzyme catalyses 2 H2O2 = O2 + 2 H2O. Functionally, bifunctional enzyme with both catalase and broad-spectrum peroxidase activity. The chain is Catalase-peroxidase from Trichlorobacter lovleyi (strain ATCC BAA-1151 / DSM 17278 / SZ) (Geobacter lovleyi).